The following is a 155-amino-acid chain: SsrA-binding protein (155 aa).

The protein belongs to the SmpB family.

Its subcellular location is the cytoplasm. Required for rescue of stalled ribosomes mediated by trans-translation. Binds to transfer-messenger RNA (tmRNA), required for stable association of tmRNA with ribosomes. tmRNA and SmpB together mimic tRNA shape, replacing the anticodon stem-loop with SmpB. tmRNA is encoded by the ssrA gene; the 2 termini fold to resemble tRNA(Ala) and it encodes a 'tag peptide', a short internal open reading frame. During trans-translation Ala-aminoacylated tmRNA acts like a tRNA, entering the A-site of stalled ribosomes, displacing the stalled mRNA. The ribosome then switches to translate the ORF on the tmRNA; the nascent peptide is terminated with the 'tag peptide' encoded by the tmRNA and targeted for degradation. The ribosome is freed to recommence translation, which seems to be the essential function of trans-translation. In Chelativorans sp. (strain BNC1), this protein is SsrA-binding protein.